The following is a 51-amino-acid chain: MAAQKSFRIKQKMAKAKKQNRPLPQWIRLRTNNTIRYNAKRRNWRRTKMNI.

A disordered region spans residues 1–22 (MAAQKSFRIKQKMAKAKKQNRP). Residues 7 to 20 (FRIKQKMAKAKKQN) are compositionally biased toward basic residues.

The protein belongs to the eukaryotic ribosomal protein eL39 family. In terms of assembly, component of the large ribosomal subunit (LSU). Mature yeast ribosomes consist of a small (40S) and a large (60S) subunit. The 40S small subunit contains 1 molecule of ribosomal RNA (18S rRNA) and 33 different proteins (encoded by 57 genes). The large 60S subunit contains 3 rRNA molecules (25S, 5.8S and 5S rRNA) and 46 different proteins (encoded by 81 genes). eL39 interacts with YIH1.

The protein resides in the cytoplasm. Component of the ribosome, a large ribonucleoprotein complex responsible for the synthesis of proteins in the cell. The small ribosomal subunit (SSU) binds messenger RNAs (mRNAs) and translates the encoded message by selecting cognate aminoacyl-transfer RNA (tRNA) molecules. The large subunit (LSU) contains the ribosomal catalytic site termed the peptidyl transferase center (PTC), which catalyzes the formation of peptide bonds, thereby polymerizing the amino acids delivered by tRNAs into a polypeptide chain. The nascent polypeptides leave the ribosome through a tunnel in the LSU and interact with protein factors that function in enzymatic processing, targeting, and the membrane insertion of nascent chains at the exit of the ribosomal tunnel. This is Large ribosomal subunit protein eL39 from Saccharomyces cerevisiae (strain ATCC 204508 / S288c) (Baker's yeast).